We begin with the raw amino-acid sequence, 728 residues long: Homoaconitase, mitochondrial (728 aa).

A mitochondrion-targeting transit peptide spans 1–24 (MVAIPRLARLSVPAWALSARGRFY). Cys362, Cys422, and Cys425 together coordinate [4Fe-4S] cluster.

Belongs to the aconitase/IPM isomerase family. Requires [4Fe-4S] cluster as cofactor.

It localises to the mitochondrion. The enzyme catalyses (2R,3S)-homoisocitrate = cis-homoaconitate + H2O. It functions in the pathway amino-acid biosynthesis; L-lysine biosynthesis via AAA pathway; L-alpha-aminoadipate from 2-oxoglutarate: step 3/5. In terms of biological role, catalyzes the reversible hydration of cis-homoaconitate to (2R,3S)-homoisocitrate, a step in the alpha-aminoadipate pathway for lysine biosynthesis. This chain is Homoaconitase, mitochondrial (LYS4), found in Cryptococcus neoformans var. neoformans serotype D (strain B-3501A) (Filobasidiella neoformans).